We begin with the raw amino-acid sequence, 244 residues long: Tubulin-folding cofactor B (244 aa).

Met-1 carries the post-translational modification N-acetylmethionine. Phosphotyrosine is present on Tyr-98. Phosphoserine is present on Ser-110. In terms of domain architecture, CAP-Gly spans 183–225 (GLTDFKPGYWIGIRYDEPLGKNDGSVNGKRYFECQAKYGAFVK). Residue Lys-219 is modified to N6-acetyllysine.

The protein belongs to the TBCB family. In terms of assembly, supercomplex made of cofactors A to E. Cofactors A and D function by capturing and stabilizing tubulin in a quasi-native conformation. Cofactor E binds to the cofactor D-tubulin complex; interaction with cofactor C then causes the release of tubulin polypeptides that are committed to the native state. Cofactors B and E can form a heterodimer which binds to alpha-tubulin and enhances their ability to dissociate tubulin heterodimers. Interacts with GAN. Interacts with DCTN1. Post-translationally, ubiquitinated in the presence of GAN which targets it for degradation by the proteasome. Phosphorylation by PAK1 is required for normal function.

Its subcellular location is the cytoplasm. It localises to the cytoskeleton. Its function is as follows. Binds to alpha-tubulin folding intermediates after their interaction with cytosolic chaperonin in the pathway leading from newly synthesized tubulin to properly folded heterodimer. Involved in regulation of tubulin heterodimer dissociation. May function as a negative regulator of axonal growth. The sequence is that of Tubulin-folding cofactor B (TBCB) from Bos taurus (Bovine).